The following is a 199-amino-acid chain: UPF0329 protein ECU01_0120/ECU01_1490/ECU08_0050 (199 aa).

The protein belongs to the UPF0329 family.

The polypeptide is UPF0329 protein ECU01_0120/ECU01_1490/ECU08_0050 (Encephalitozoon cuniculi (strain GB-M1) (Microsporidian parasite)).